A 414-amino-acid polypeptide reads, in one-letter code: Glyceraldehyde-3-phosphate dehydrogenase, chloroplastic (414 aa).

Residues 1 to 76 (MAFVAPVATV…GIVAATFGPT (76 aa)) constitute a chloroplast transit peptide. NADP(+) is bound by residues 88 to 89 (RI), D112, and R156. D-glyceraldehyde 3-phosphate contacts are provided by residues 230–232 (SCT), T261, R276, 289–290 (TG), and R312. C231 acts as the Nucleophile in catalysis. An NADP(+)-binding site is contributed by N394.

The protein belongs to the glyceraldehyde-3-phosphate dehydrogenase family. In terms of assembly, homotetramer.

Its subcellular location is the plastid. The protein localises to the chloroplast. The enzyme catalyses D-glyceraldehyde 3-phosphate + phosphate + NADP(+) = (2R)-3-phospho-glyceroyl phosphate + NADPH + H(+). The protein operates within carbohydrate biosynthesis; Calvin cycle. The chain is Glyceraldehyde-3-phosphate dehydrogenase, chloroplastic (GAPA) from Chondrus crispus (Carrageen Irish moss).